Here is a 27-residue protein sequence, read N- to C-terminus: Defensin-like protein 2 (27 aa).

Gln1 bears the Pyrrolidone carboxylic acid mark.

It belongs to the DEFL family. In terms of assembly, forms oligomers in its native state.

Functionally, possesses some antifungal activity sensitive to inorganic cations and antibacterial activity against B.megaterium. The protein is Defensin-like protein 2 of Brassica campestris (Field mustard).